We begin with the raw amino-acid sequence, 391 residues long: ATP-sensitive inward rectifier potassium channel 1 (391 aa).

The Cytoplasmic portion of the chain corresponds to 1–77 (MNASSRNVFD…IWTTVLDLKW (77 aa)). Phosphoserine; by SGK1 is present on serine 44. The helical transmembrane segment at 78-102 (RYKMTIFITAFLGSWFFFGLLWYAV) threads the bilayer. Residues 103-127 (AYIHKDLPEFHPSANHTPCVENING) are Extracellular-facing. Asparagine 117 carries an N-linked (GlcNAc...) asparagine glycan. Positions 128-139 (LTSAFLFSLETQ) form an intramembrane region, helical; Pore-forming. Residues 140-146 (VTIGYGF) constitute an intramembrane region (pore-forming). The Selectivity filter signature appears at 141–146 (TIGYGF). Over 147-155 (RCVTEQCAT) the chain is Extracellular. The chain crosses the membrane as a helical span at residues 156–177 (AIFLLIFQSILGVIINSFMCGA). Topologically, residues 178–391 (ILAKISRPKK…EVNETDDTKM (214 aa)) are cytoplasmic. A polyphosphoinositide (PIP2)-binding region spans residues 180 to 207 (AKISRPKKRAKTITFSKNAVISKRGGKL). Residue 223-230 (GSHIYGKL) participates in ATP binding.

Belongs to the inward rectifier-type potassium channel (TC 1.A.2.1) family. KCNJ1 subfamily. Interacts with SGK1 and SLC9A3R2/NHERF2. Post-translationally, phosphorylation at Ser-44 by SGK1 is necessary for its expression at the cell membrane. In the kidney and pancreatic islets. Lower levels in skeletal muscle, pancreas, spleen, brain, heart and liver.

Its subcellular location is the cell membrane. The enzyme catalyses K(+)(in) = K(+)(out). Its activity is regulated as follows. Inhibited by WNK3. Activated by phosphatidylinositol 4,5 biphosphate (PtdIns(4,5)P2). In terms of biological role, inward rectifier potassium channels are characterized by a greater tendency to allow potassium to flow into the cell rather than out of it. Their voltage dependence is regulated by the concentration of extracellular potassium; as external potassium is raised, the voltage range of the channel opening shifts to more positive voltages. The inward rectification is mainly due to the blockage of outward current by internal magnesium. This channel is activated by internal ATP and can be blocked by external barium. In the kidney, probably plays a major role in potassium homeostasis. In Homo sapiens (Human), this protein is ATP-sensitive inward rectifier potassium channel 1 (KCNJ1).